Reading from the N-terminus, the 595-residue chain is MRFAYLATLAGSLLAGLAQAVKVNPLPAPQHIKWGESGPQYLDWNVKYSGPRDRTIIAAWRRTWGSIVQLRWTPAALEAPIPTFAPFIVGNGKRDAHSNRRILRVSVKVENTNVDLQHGVDESYTLQIRDKSDSIRITAKTTWGVLRAFTTLQQIVIFKRGRFLVEQPVDIKDYPLYPVRGIMIDTARNFISVKKIFEQLDGMALSKLNVLHWHITDTQSWPVEVRSYPQMTEDAYSRRETYGPSDIRKVIEYARARGIRVVPEIDMPGHSASGWRKIDPDIVACADSWWSNDDWEKHTAVQPNPGQLDIANNKTYKVVEKVYNDISRIFTDDWFHVGGDELQPNCFLTSKIVRDWLKQGSRTFNDLLQHWVDKTVPMMKKVKKNRRLLMWEDVLLSGNMHAHRVPRDIIMQSWNGGLANIKKLTARGYEVIVSSADFLYLDCGYGGWVGNDPRYNVMENPDPETPNFNYGGNGGSWCGPYKTWQRIYNYDFTDGLNYAEKKRVIGAIAPLWSEQADDVVISNKMWPRAAALAELVWSGNVGKDGKKRTTLMTQRILNFREYLVANGIMAAPLQPKYCLKHPHSCDLYYDQTVIM.

The N-terminal stretch at 1–20 (MRFAYLATLAGSLLAGLAQA) is a signal peptide. Residue N313 is glycosylated (N-linked (GlcNAc...) asparagine).

This sequence belongs to the glycosyl hydrolase 20 family.

The catalysed reaction is Hydrolysis of terminal non-reducing N-acetyl-D-hexosamine residues in N-acetyl-beta-D-hexosaminides.. Its function is as follows. Beta-hexosaminidase that shows a broad substrate specificity. This chain is Beta-hexosaminidase 1, found in Coccidioides posadasii (strain RMSCC 757 / Silveira) (Valley fever fungus).